The following is a 369-amino-acid chain: Phospho-N-acetylmuramoyl-pentapeptide-transferase (369 aa).

A run of 10 helical transmembrane segments spans residues 2-22, 55-75, 86-106, 120-140, 163-183, 196-216, 239-259, 266-286, 291-311, and 348-368; these read IALL…TPLF, TVVV…MWMM, GLLL…DDFI, AKLI…LQFP, LAFG…NLII, LDGL…IMGI, PMDL…FLWW, IFMG…FAIL, LLLA…IIQV, and ILAG…WVVL.

This sequence belongs to the glycosyltransferase 4 family. MraY subfamily. Mg(2+) is required as a cofactor.

It localises to the cell membrane. It carries out the reaction UDP-N-acetyl-alpha-D-muramoyl-L-alanyl-gamma-D-glutamyl-meso-2,6-diaminopimeloyl-D-alanyl-D-alanine + di-trans,octa-cis-undecaprenyl phosphate = di-trans,octa-cis-undecaprenyl diphospho-N-acetyl-alpha-D-muramoyl-L-alanyl-D-glutamyl-meso-2,6-diaminopimeloyl-D-alanyl-D-alanine + UMP. Its pathway is cell wall biogenesis; peptidoglycan biosynthesis. Catalyzes the initial step of the lipid cycle reactions in the biosynthesis of the cell wall peptidoglycan: transfers peptidoglycan precursor phospho-MurNAc-pentapeptide from UDP-MurNAc-pentapeptide onto the lipid carrier undecaprenyl phosphate, yielding undecaprenyl-pyrophosphoryl-MurNAc-pentapeptide, known as lipid I. This Paenarthrobacter aurescens (strain TC1) protein is Phospho-N-acetylmuramoyl-pentapeptide-transferase.